The primary structure comprises 293 residues: ATP synthase gamma chain (293 aa).

Belongs to the ATPase gamma chain family. F-type ATPases have 2 components, CF(1) - the catalytic core - and CF(0) - the membrane proton channel. CF(1) has five subunits: alpha(3), beta(3), gamma(1), delta(1), epsilon(1). CF(0) has three main subunits: a, b and c.

Its subcellular location is the cell membrane. Its function is as follows. Produces ATP from ADP in the presence of a proton gradient across the membrane. The gamma chain is believed to be important in regulating ATPase activity and the flow of protons through the CF(0) complex. The polypeptide is ATP synthase gamma chain (Streptococcus agalactiae serotype Ia (strain ATCC 27591 / A909 / CDC SS700)).